Reading from the N-terminus, the 141-residue chain is MALERTLSIIKPDAVAKNVIGEIYARFEKAGLKVVAAKYKQLSRREAEGFYAVHRERPFFNALVEFMISGPVMIQALEGENAVLAHRDLLGATNPKEAAPGTIRADFAESIDANAAHGSDSVENAAIEIAYFFAATEVVSR.

Positions 11, 59, 87, 93, 104, and 114 each coordinate ATP. Residue His117 is the Pros-phosphohistidine intermediate of the active site.

The protein belongs to the NDK family. In terms of assembly, homotetramer. It depends on Mg(2+) as a cofactor.

Its subcellular location is the cytoplasm. It carries out the reaction a 2'-deoxyribonucleoside 5'-diphosphate + ATP = a 2'-deoxyribonucleoside 5'-triphosphate + ADP. It catalyses the reaction a ribonucleoside 5'-diphosphate + ATP = a ribonucleoside 5'-triphosphate + ADP. Major role in the synthesis of nucleoside triphosphates other than ATP. The ATP gamma phosphate is transferred to the NDP beta phosphate via a ping-pong mechanism, using a phosphorylated active-site intermediate. The protein is Nucleoside diphosphate kinase of Stenotrophomonas maltophilia (strain R551-3).